Here is a 150-residue protein sequence, read N- to C-terminus: Histone H2A.1 (150 aa).

An N-acetylmethionine modification is found at Met-1. Basic residues-rich tracts occupy residues 1–24 and 141–150; these read MDAS…KKSV and SKAKKSPKKA. 2 disordered regions span residues 1 to 26 and 128 to 150; these read MDAS…SVTR and RKEN…PKKA. 2 consecutive short sequence motifs (SPKK motif) follow at residues 139–142 and 146–149; these read SPSK and SPKK.

The protein belongs to the histone H2A family. The nucleosome is a histone octamer containing two molecules each of H2A, H2B, H3 and H4 assembled in one H3-H4 heterotetramer and two H2A-H2B heterodimers. The octamer wraps approximately 147 bp of DNA. High expression in root meristematic tissues, moderate in whole shoot and very low in mature leaves.

The protein localises to the nucleus. The protein resides in the chromosome. In terms of biological role, core component of nucleosome. Nucleosomes wrap and compact DNA into chromatin, limiting DNA accessibility to the cellular machineries which require DNA as a template. Histones thereby play a central role in transcription regulation, DNA repair, DNA replication and chromosomal stability. DNA accessibility is regulated via a complex set of post-translational modifications of histones, also called histone code, and nucleosome remodeling. In Pisum sativum (Garden pea), this protein is Histone H2A.1.